The sequence spans 114 residues: V-type proton ATPase subunit G (114 aa).

An N-acetylserine modification is found at Ser-2.

Belongs to the V-ATPase G subunit family. In terms of assembly, V-ATPase is a heteromultimeric enzyme composed of a peripheral catalytic V1 complex (components A to H) attached to an integral membrane V0 proton pore complex (components: a, c, c', c'', d, e, f and VOA1).

Its subcellular location is the vacuole membrane. In terms of biological role, subunit of the V1 complex of vacuolar(H+)-ATPase (V-ATPase), a multisubunit enzyme composed of a peripheral complex (V1) that hydrolyzes ATP and a membrane integral complex (V0) that translocates protons. V-ATPase is responsible for acidifying and maintaining the pH of intracellular compartments. This Saccharomyces cerevisiae (strain ATCC 204508 / S288c) (Baker's yeast) protein is V-type proton ATPase subunit G.